Reading from the N-terminus, the 226-residue chain is Probable amino-acid ABC transporter permease protein YckA (226 aa).

The ABC transmembrane type-1 domain maps to 27-215; that stretch reads IGYTLLISFV…AICSIAAVFQ (189 aa). The next 5 helical transmembrane spans lie at 31 to 51, 73 to 93, 94 to 114, 160 to 180, and 194 to 214; these read LLIS…ISLA, VPIL…GIEF, SAVT…IAEI, VLLD…PELL, and MTMY…AAVF.

This sequence belongs to the binding-protein-dependent transport system permease family. HisMQ subfamily.

It is found in the cell membrane. Functionally, part of a binding-protein-dependent transport system. Probably responsible for the translocation of the substrate across the membrane. The polypeptide is Probable amino-acid ABC transporter permease protein YckA (yckA) (Bacillus subtilis (strain 168)).